Reading from the N-terminus, the 620-residue chain is Guanylate cyclase soluble subunit beta-1 (620 aa).

H105 serves as a coordination point for heme. The Guanylate cyclase domain maps to 421 to 554 (TILFSGIVGF…NTVNLTSRTE (134 aa)).

This sequence belongs to the adenylyl cyclase class-4/guanylyl cyclase family. In terms of assembly, the active enzyme is formed by a heterodimer of an alpha and a beta subunit. Heterodimer with GUCY1A1. Can also form inactive homodimers in vitro. The cofactor is heme.

It is found in the cytoplasm. It catalyses the reaction GTP = 3',5'-cyclic GMP + diphosphate. Activated by nitric oxide in the presence of magnesium or manganese ions. Its function is as follows. Mediates responses to nitric oxide (NO) by catalyzing the biosynthesis of the signaling molecule cGMP. In Mus musculus (Mouse), this protein is Guanylate cyclase soluble subunit beta-1 (Gucy1b1).